The chain runs to 306 residues: Protein YIPF1 (306 aa).

Over 1–119 (MAAVDDLQFE…VRLYIRSNPD (119 aa)) the chain is Cytoplasmic. The tract at residues 14–62 (NAATSLTANPDATTVNIEDPGETPKHQSGSPRGSGREEDDELLGNDDSD) is disordered. The span at 15 to 29 (AATSLTANPDATTVN) shows a compositional bias: polar residues. Positions 50–59 (EEDDELLGND) are enriched in acidic residues. A helical membrane pass occupies residues 120–140 (LYGPFWICATLVFAIAISGNL). At 141–162 (SNFLIHLGEKTYRYVPEFRKVS) the chain is on the lumenal side. The chain crosses the membrane as a helical span at residues 163–183 (IAATTIYAYAWLVPLALWGFL). The Cytoplasmic portion of the chain corresponds to 184–200 (MWRNSKVMNIVSYSFLE). A helical membrane pass occupies residues 201 to 221 (IVCVYGYSLFIYIPTAILWII). The Lumenal segment spans residues 222–227 (PQKAVR). A helical membrane pass occupies residues 228–248 (WILVMIALGISGSVLAMTFWP). The Cytoplasmic segment spans residues 249 to 256 (AVREDNRR). The chain crosses the membrane as a helical span at residues 257 to 277 (VALATIVTIVLLHMLLSVGCL). Topologically, residues 278–306 (AYFFDAPEMDHLPTTTATPNQTVAAAKSS) are lumenal. Residue asparagine 297 is glycosylated (N-linked (GlcNAc...) asparagine).

Belongs to the YIP1 family. Interacts with YIPF6; this interaction may stabilize YIPF1. May also form a ternary complex with YIPF2 and YIPF6.

The protein resides in the golgi apparatus. It is found in the cis-Golgi network membrane. It localises to the trans-Golgi network membrane. The protein localises to the late endosome membrane. This chain is Protein YIPF1 (YIPF1), found in Pongo abelii (Sumatran orangutan).